The chain runs to 91 residues: Large ribosomal subunit protein bL31B (91 aa).

This sequence belongs to the bacterial ribosomal protein bL31 family. Type B subfamily. As to quaternary structure, part of the 50S ribosomal subunit.

This Neisseria meningitidis serogroup A / serotype 4A (strain DSM 15465 / Z2491) protein is Large ribosomal subunit protein bL31B.